Here is a 463-residue protein sequence, read N- to C-terminus: Cysteine--tRNA ligase (463 aa).

Cysteine 27 contributes to the Zn(2+) binding site. The short motif at 29–39 (MTVYDYCHLGH) is the 'HIGH' region element. Zn(2+) is bound by residues cysteine 208, histidine 233, and glutamate 237. Residues 265 to 269 (KMSKS) carry the 'KMSKS' region motif. Lysine 268 contacts ATP.

Belongs to the class-I aminoacyl-tRNA synthetase family. In terms of assembly, monomer. The cofactor is Zn(2+).

It localises to the cytoplasm. It catalyses the reaction tRNA(Cys) + L-cysteine + ATP = L-cysteinyl-tRNA(Cys) + AMP + diphosphate. The chain is Cysteine--tRNA ligase from Marinobacter nauticus (strain ATCC 700491 / DSM 11845 / VT8) (Marinobacter aquaeolei).